We begin with the raw amino-acid sequence, 49 residues long: Defensin Tm-AMP-D1.2 (49 aa).

Intrachain disulfides connect cysteine 3/cysteine 49, cysteine 14/cysteine 34, cysteine 20/cysteine 43, and cysteine 24/cysteine 45.

Plant defense peptide. The sequence is that of Defensin Tm-AMP-D1.2 from Triticum monococcum (Einkorn wheat).